The sequence spans 991 residues: Regulator of telomere elongation helicase 1 homolog (991 aa).

The 313-residue stretch at 7 to 319 folds into the Helicase ATP-binding domain; that stretch reads NGIPVNFPFE…DDLVLLKEIL (313 aa). 42–49 is an ATP binding site; the sequence is SPTGTGKT. 4 residues coordinate [4Fe-4S] cluster: Cys148, Cys166, Cys175, and Cys211. Positions 254–257 match the DEAH box motif; sequence DEAH. The disordered stretch occupies residues 812–833; the sequence is SMKVNPHSRSTKSAGDDAEAGG.

The protein belongs to the helicase family. RAD3/XPD subfamily.

The protein resides in the nucleus. It catalyses the reaction ATP + H2O = ADP + phosphate + H(+). Functionally, a probable ATP-dependent DNA helicase implicated in DNA repair and the maintenance of genomic stability. Acts as an anti-recombinase to counteract toxic recombination and limit crossover during meiosis. Regulates meiotic recombination and crossover homeostasis by physically dissociating strand invasion events and thereby promotes noncrossover repair by meiotic synthesis dependent strand annealing (SDSA) as well as disassembly of D loop recombination intermediates. The chain is Regulator of telomere elongation helicase 1 homolog from Anopheles gambiae (African malaria mosquito).